A 208-amino-acid chain; its full sequence is Small ribosomal subunit protein uS4 (208 aa).

The S4 RNA-binding domain maps to Thr97–Leu160.

This sequence belongs to the universal ribosomal protein uS4 family. As to quaternary structure, part of the 30S ribosomal subunit. Contacts protein S5. The interaction surface between S4 and S5 is involved in control of translational fidelity.

In terms of biological role, one of the primary rRNA binding proteins, it binds directly to 16S rRNA where it nucleates assembly of the body of the 30S subunit. With S5 and S12 plays an important role in translational accuracy. This Xanthomonas axonopodis pv. citri (strain 306) protein is Small ribosomal subunit protein uS4.